A 220-amino-acid polypeptide reads, in one-letter code: Probable chemoreceptor glutamine deamidase CheD 2 (220 aa).

The protein belongs to the CheD family.

It catalyses the reaction L-glutaminyl-[protein] + H2O = L-glutamyl-[protein] + NH4(+). In terms of biological role, probably deamidates glutamine residues to glutamate on methyl-accepting chemotaxis receptors (MCPs), playing an important role in chemotaxis. The sequence is that of Probable chemoreceptor glutamine deamidase CheD 2 from Methanosarcina acetivorans (strain ATCC 35395 / DSM 2834 / JCM 12185 / C2A).